Here is a 473-residue protein sequence, read N- to C-terminus: ATP synthase subunit beta (473 aa).

158-165 (GGAGVGKT) provides a ligand contact to ATP.

The protein belongs to the ATPase alpha/beta chains family. As to quaternary structure, F-type ATPases have 2 components, CF(1) - the catalytic core - and CF(0) - the membrane proton channel. CF(1) has five subunits: alpha(3), beta(3), gamma(1), delta(1), epsilon(1). CF(0) has three main subunits: a(1), b(2) and c(9-12). The alpha and beta chains form an alternating ring which encloses part of the gamma chain. CF(1) is attached to CF(0) by a central stalk formed by the gamma and epsilon chains, while a peripheral stalk is formed by the delta and b chains.

It localises to the cell membrane. The catalysed reaction is ATP + H2O + 4 H(+)(in) = ADP + phosphate + 5 H(+)(out). In terms of biological role, produces ATP from ADP in the presence of a proton gradient across the membrane. The catalytic sites are hosted primarily by the beta subunits. The protein is ATP synthase subunit beta of Geobacillus stearothermophilus (Bacillus stearothermophilus).